Here is a 210-residue protein sequence, read N- to C-terminus: N-(5'-phosphoribosyl)anthranilate isomerase (210 aa).

Belongs to the TrpF family.

The enzyme catalyses N-(5-phospho-beta-D-ribosyl)anthranilate = 1-(2-carboxyphenylamino)-1-deoxy-D-ribulose 5-phosphate. Its pathway is amino-acid biosynthesis; L-tryptophan biosynthesis; L-tryptophan from chorismate: step 3/5. The chain is N-(5'-phosphoribosyl)anthranilate isomerase from Nostoc punctiforme (strain ATCC 29133 / PCC 73102).